The chain runs to 185 residues: MTWRSEHIWIDLISGSRKKSNFCWAFLLFLGSLGFVLVGTSSYLGRNLISSFPPQQITFFPQGLVMSFYGIAGLFISCYLWCTILWNVGSGYDLFDRKEGIVRIFRWGFPGKSRRIVLRFLMKDIQSDRTEVKEGVSARRVPYMEIRGQGAIPLIRTDENFTTRREIEQKAAELAYFLRVPIEVF.

The next 2 membrane-spanning stretches (helical) occupy residues 21–43 (NFCW…TSSY) and 63–85 (GLVM…CTIL).

It belongs to the Ycf4 family.

The protein localises to the plastid. Its subcellular location is the chloroplast thylakoid membrane. Its function is as follows. Seems to be required for the assembly of the photosystem I complex. This chain is Photosystem I assembly protein Ycf4, found in Brassica oleracea (Wild cabbage).